A 927-amino-acid chain; its full sequence is Tubulin monoglycylase TTLL3 (927 aa).

Polar residues predominate over residues 35–47; sequence RSQPSELRTNFSS. Disordered stretches follow at residues 35 to 113 and 194 to 227; these read RSQP…PQPV and HPPG…EENE. Over residues 216 to 226 the composition is skewed to acidic residues; that stretch reads DATEDEDEEEN. A TTL domain is found at 345 to 702; that stretch reads VLKLVVKLEE…DRRLDRSCDT (358 aa). ATP is bound by residues K476, 482–483, 514–517, 527–529, and 571–572; these read RG, QKYI, KFD, and CN. R482 is a binding site for a protein. Residues D649, E662, and N664 each contribute to the Mg(2+) site. An ATP-binding site is contributed by E662. Disordered stretches follow at residues 735–799 and 897–927; these read VPVG…SGKG and EEGH…KTET. Polar residues predominate over residues 752–769; it reads LTQQGSGESKDSGSPTHR. Residues 776-788 are compositionally biased toward basic and acidic residues; sequence ARAESLEHTEKPE. Residues 916-927 are compositionally biased toward polar residues; it reads LSSTEPCSKTET.

It depends on Mg(2+) as a cofactor. In terms of tissue distribution, highly expressed in brain and testis. Expressed in heart, kidney, liver, lung, muscle, spleen, trachea and colon. Expressed in sperm flagellum. In the brain, specifically expressed in ependymal cilia.

It localises to the cytoplasm. It is found in the cytoskeleton. The protein resides in the cell projection. Its subcellular location is the cilium. The protein localises to the cilium axoneme. It localises to the flagellum axoneme. It catalyses the reaction L-glutamyl-[protein] + glycine + ATP = glycyl-L-glutamyl-[protein] + ADP + phosphate + H(+). Monoglycylase which modifies alpha- and beta-tubulin, adding a single glycine on the gamma-carboxyl groups of specific glutamate residues to generate monoglycine side chains within the C-terminal tail of tubulin. Not involved in elongation step of the polyglycylation reaction. Preferentially glycylates a beta-tail peptide over the alpha-tail, although shifts its preference toward alpha-tail as beta-tail glutamylation increases. Competes with polyglutamylases for modification site on beta-tubulin substrate, thereby creating an anticorrelation between glycylation and glutamylation reactions. Together with TTLL8, mediates microtubule glycylation of primary and motile cilia, which is essential for their stability and maintenance. Involved in microtubule glycylation of primary cilia in colon which controls cell proliferation of epithelial cells and plays an essential role in colon cancer development. Together with TTLL8, glycylates sperm flagella which regulates axonemal dynein motor activity, thereby controlling flagellar beat, directional sperm swimming and male fertility. This Mus musculus (Mouse) protein is Tubulin monoglycylase TTLL3.